A 319-amino-acid polypeptide reads, in one-letter code: Protein SICKLE (319 aa).

3 disordered regions span residues 1-59, 71-239, and 262-299; these read MEDS…TQRF, SFKK…PGAE, and CSDASSSSSTGQAWLPKSIAPKKSVTSEATHKTSSNQQ. Composition is skewed to polar residues over residues 27-56 and 78-88; these read TTGTETSMSTGHLSNPLAETSNHQQDSFET and PKQQYISSPSH. Positions 93 to 103 are enriched in pro residues; it reads PVPPQFPPSVP. A compositionally biased stretch (polar residues) spans 185–210; sequence SYNNTPPQFSNYGRQNANWGGNTYPN. Positions 228-238 are enriched in basic and acidic residues; sequence DGGRRPMEPGA. Over residues 285-299 the composition is skewed to polar residues; it reads SVTSEATHKTSSNQQ.

In terms of assembly, interacts with ubiquitin thioesterases UBP12 and UBP13, and with protein phosphatase 2A subunits PP2AB1, PP2AB2, PP2A3, PP2A4, PP2AA1 and PP2AA2. Expressed in the shoot apical meristem (SAM), embryos, seedlings, root tips, and root and leaf primordia.

The protein localises to the nucleus. It is found in the cytoplasm. Its subcellular location is the cytosol. Functionally, involved in miRNAs and siRNAs biogenesis and thus promotes gene silencing. Modulates auxin (IAA) transport-related developmental programs by regulating protein phosphatase 2A (PP2As)-driven auxin efflux carrier PIN proteins recycling and polarity. Required during development. Necessary for abiotic stress (e.g. chilling and salt) tolerance. In Arabidopsis thaliana (Mouse-ear cress), this protein is Protein SICKLE.